We begin with the raw amino-acid sequence, 745 residues long: Translation initiation factor IF-2 (745 aa).

Residues 1 to 154 (MSDKPRRDTG…PAARPVVRPR (154 aa)) are disordered. Residues 36–56 (TGRSPNASTGGNRSAGNQAGN) show a composition bias toward polar residues. Positions 68–98 (ATTPAPNRNTPPAGARQGGAANARTGTPPVA) are enriched in low complexity. Residues 99–113 (RGGGGGVTPPTGRGG) show a composition bias toward gly residues. Positions 114 to 126 (NNPRAARNQPRSR) are enriched in low complexity. A compositionally biased stretch (basic and acidic residues) spans 127–138 (QQPEEREREHVL). A tr-type G domain is found at 241–410 (PRPPVVTIMG…LLVADLEDLR (170 aa)). Positions 250 to 257 (GHVDHGKT) are G1. 250 to 257 (GHVDHGKT) lines the GTP pocket. Positions 275 to 279 (GITQH) are G2. Residues 296 to 299 (DTPG) are G3. GTP contacts are provided by residues 296–300 (DTPGH) and 350–353 (NKID). The tract at residues 350–353 (NKID) is G4. The tract at residues 386–388 (SAR) is G5.

Belongs to the TRAFAC class translation factor GTPase superfamily. Classic translation factor GTPase family. IF-2 subfamily.

It is found in the cytoplasm. In terms of biological role, one of the essential components for the initiation of protein synthesis. Protects formylmethionyl-tRNA from spontaneous hydrolysis and promotes its binding to the 30S ribosomal subunits. Also involved in the hydrolysis of GTP during the formation of the 70S ribosomal complex. This is Translation initiation factor IF-2 from Chloroflexus aurantiacus (strain ATCC 29366 / DSM 635 / J-10-fl).